The sequence spans 647 residues: Starch synthase 1, chloroplastic/amyloplastic (647 aa).

The transit peptide at 1–41 directs the protein to the chloroplast; that stretch reads MAATGVGAGCLAPSVRLRADPATAARASACVVRARLRRVAR. The span at 66–91 shows a compositional bias: pro residues; the sequence is PLVPGFLAPPPPAPAQSPAPTQPPLP. Residues 66 to 95 are disordered; the sequence is PLVPGFLAPPPPAPAQSPAPTQPPLPDAGV. Residue Lys153 coordinates ADP-alpha-D-glucose.

It belongs to the glycosyltransferase 1 family. Bacterial/plant glycogen synthase subfamily.

The protein localises to the plastid. The protein resides in the chloroplast. It is found in the amyloplast. It carries out the reaction [(1-&gt;4)-alpha-D-glucosyl](n) + ADP-alpha-D-glucose = [(1-&gt;4)-alpha-D-glucosyl](n+1) + ADP + H(+). Its pathway is glycan biosynthesis; starch biosynthesis. This Triticum aestivum (Wheat) protein is Starch synthase 1, chloroplastic/amyloplastic (WSSI-2).